A 474-amino-acid polypeptide reads, in one-letter code: tRNA-2-methylthio-N(6)-dimethylallyladenosine synthase (474 aa).

The MTTase N-terminal domain maps to 3–120 (KKLLIKTWGC…LPEMIKQSQS (118 aa)). Residues Cys12, Cys49, Cys83, Cys157, Cys161, and Cys164 each coordinate [4Fe-4S] cluster. The Radical SAM core domain maps to 143–375 (RAEGATAFVS…QQTVNTQAMR (233 aa)). In terms of domain architecture, TRAM spans 378-441 (RQMLDTEQRV…ANSLRGELVR (64 aa)).

The protein belongs to the methylthiotransferase family. MiaB subfamily. As to quaternary structure, monomer. The cofactor is [4Fe-4S] cluster.

It localises to the cytoplasm. The enzyme catalyses N(6)-dimethylallyladenosine(37) in tRNA + (sulfur carrier)-SH + AH2 + 2 S-adenosyl-L-methionine = 2-methylsulfanyl-N(6)-dimethylallyladenosine(37) in tRNA + (sulfur carrier)-H + 5'-deoxyadenosine + L-methionine + A + S-adenosyl-L-homocysteine + 2 H(+). Catalyzes the methylthiolation of N6-(dimethylallyl)adenosine (i(6)A), leading to the formation of 2-methylthio-N6-(dimethylallyl)adenosine (ms(2)i(6)A) at position 37 in tRNAs that read codons beginning with uridine. This chain is tRNA-2-methylthio-N(6)-dimethylallyladenosine synthase, found in Vibrio campbellii (strain ATCC BAA-1116).